Reading from the N-terminus, the 311-residue chain is 4-hydroxy-tetrahydrodipicolinate synthase (311 aa).

Thr-51 contributes to the pyruvate binding site. The active-site Proton donor/acceptor is Tyr-140. Catalysis depends on Lys-168, which acts as the Schiff-base intermediate with substrate. Ile-209 contacts pyruvate.

This sequence belongs to the DapA family. In terms of assembly, homotetramer; dimer of dimers.

It is found in the cytoplasm. It catalyses the reaction L-aspartate 4-semialdehyde + pyruvate = (2S,4S)-4-hydroxy-2,3,4,5-tetrahydrodipicolinate + H2O + H(+). The protein operates within amino-acid biosynthesis; L-lysine biosynthesis via DAP pathway; (S)-tetrahydrodipicolinate from L-aspartate: step 3/4. Its function is as follows. Catalyzes the condensation of (S)-aspartate-beta-semialdehyde [(S)-ASA] and pyruvate to 4-hydroxy-tetrahydrodipicolinate (HTPA). The sequence is that of 4-hydroxy-tetrahydrodipicolinate synthase from Streptococcus pneumoniae (strain 70585).